Reading from the N-terminus, the 447-residue chain is Succinate--CoA ligase [ADP-forming] subunit beta, mitochondrial (447 aa).

The N-terminal 34 residues, 1–34, are a transit peptide targeting the mitochondrion; it reads MFKLGRNRALASAFAATSRAPLASRLPSVSQQQR. Residues 45–287 enclose the ATP-grasp domain; sequence ADLLRQYGIG…TTQEDPDEVR (243 aa). ATP-binding positions include K82, 89–91, and E150; that span reads GRG. N242 and D256 together coordinate Mg(2+). Residues N307 and 364-366 contribute to the substrate site; that span reads GIV.

It belongs to the succinate/malate CoA ligase beta subunit family. Heterodimer of an alpha and a beta subunit. It depends on Mg(2+) as a cofactor.

The protein resides in the mitochondrion. It carries out the reaction succinate + ATP + CoA = succinyl-CoA + ADP + phosphate. The protein operates within carbohydrate metabolism; tricarboxylic acid cycle; succinate from succinyl-CoA (ligase route): step 1/1. In terms of biological role, succinyl-CoA synthetase functions in the citric acid cycle (TCA), coupling the hydrolysis of succinyl-CoA to the synthesis of ATP and thus represents the only step of substrate-level phosphorylation in the TCA. The beta subunit provides nucleotide specificity of the enzyme and binds the substrate succinate, while the binding sites for coenzyme A and phosphate are found in the alpha subunit. In Neurospora crassa (strain ATCC 24698 / 74-OR23-1A / CBS 708.71 / DSM 1257 / FGSC 987), this protein is Succinate--CoA ligase [ADP-forming] subunit beta, mitochondrial.